The chain runs to 294 residues: Octopine-binding periplasmic protein (294 aa).

Positions 1 to 20 (MRLKSIMCAALFVVAGQAAA) are cleaved as a signal peptide. Cysteines 57 and 64 form a disulfide.

This sequence belongs to the bacterial solute-binding protein 3 family.

Its subcellular location is the periplasm. Its function is as follows. Component of the octopine active transport system probably consisting of four subunits: Q, M, P and T. This chain is Octopine-binding periplasmic protein (occT), found in Rhizobium meliloti (Ensifer meliloti).